Consider the following 528-residue polypeptide: Purine-cytosine permease FCY21 (528 aa).

Over 1-90 (MPQTHEMSLN…DDSILNAASM (90 aa)) the chain is Cytoplasmic. Position 43 is a phosphoserine (S43). A Phosphothreonine modification is found at T46. Residues 91–111 (WFSANMVLPAYAIGALGPMVF) form a helical membrane-spanning segment. Residues 112–118 (DLNFGQS) are Extracellular-facing. A helical membrane pass occupies residues 119 to 139 (VFVIIFFNLLGLVSVAFFSVF). At 140–161 (GAELGLRQMILSRYLVGNIAAR) the chain is on the cytoplasmic side. Residues 162–182 (IFSFINFIACIGWGIVNTVAS) form a helical membrane-spanning segment. The Extracellular segment spans residues 183–198 (SQVLNMVNPGHQCPLW). A helical membrane pass occupies residues 199 to 219 (AGCIVIIGATVIVTFFGYGVI). At 220–221 (HA) the chain is on the cytoplasmic side. Residues 222–242 (YEKWAWVPNFAVFLVIIARLA) form a helical membrane-spanning segment. The Extracellular segment spans residues 243-260 (RSKKFVLGEWTSGPTTAG). A helical membrane pass occupies residues 261-281 (NVLSFGSTVYGFAAGWTTYAA). At 282-295 (DYTVYMPRKTNKYK) the chain is on the cytoplasmic side. A helical membrane pass occupies residues 296–316 (IFFSLVVGLATPLYFTMILGA). Topologically, residues 317–340 (AVAMAAIGDPAWKTYYDENSIGGL) are extracellular. A helical transmembrane segment spans residues 341 to 361 (TFAVLVPNSVHGFGQFCCVLL). The Cytoplasmic segment spans residues 362 to 393 (SLSTIANNVPNMYTIALSVQATWEPLAKVPRV). Residues 394 to 414 (IWTLLGNAAALGIAIPACYYF) form a helical membrane-spanning segment. The Extracellular segment spans residues 415–416 (ST). The helical transmembrane segment at 417–437 (FMNYFMDSIGYYLAIYIAIAC) threads the bilayer. Topologically, residues 438–460 (SEHFIYRRSFSAYNVDDWDSWER) are cytoplasmic. Residues 461-481 (LPIGIAGTAALIVGAFGVALG) traverse the membrane as a helical segment. At 482–493 (MCQTYWVGEISR) the chain is on the extracellular side. The chain crosses the membrane as a helical span at residues 494–514 (LIGDYGGDIGFELGLSWAFIV). The Cytoplasmic segment spans residues 515 to 528 (YNIARPFELKYFGR).

Belongs to the purine-cytosine permease (2.A.39) family.

The protein resides in the membrane. In terms of biological role, probable purine-cytosine permease. The protein is Purine-cytosine permease FCY21 (FCY21) of Saccharomyces cerevisiae (strain ATCC 204508 / S288c) (Baker's yeast).